The sequence spans 137 residues: Bet1-like protein At4g14600 (137 aa).

The Cytoplasmic segment spans residues 1-113 (MASNPHRSGA…MSIIRSGNNH (113 aa)). The 63-residue stretch at 43–105 (DPMHSDLDDE…KNNIRKLNMS (63 aa)) folds into the t-SNARE coiled-coil homology domain. The chain crosses the membrane as a helical; Anchor for type IV membrane protein span at residues 114–134 (IMHVVLFALLVFFVLYIWSKM). Residues 135–137 (FKR) are Vesicular-facing.

This sequence belongs to the BET1 family.

The protein resides in the golgi apparatus membrane. Its subcellular location is the endoplasmic reticulum membrane. Required for vesicular transport from the ER to the Golgi complex. Functions as a SNARE associated with ER-derived vesicles. The chain is Bet1-like protein At4g14600 from Arabidopsis thaliana (Mouse-ear cress).